We begin with the raw amino-acid sequence, 332 residues long: Gibberellin 2-beta-dioxygenase (332 aa).

In terms of domain architecture, Fe2OG dioxygenase spans Lys-175 to Pro-280. Positions 204, 206, and 261 each coordinate Fe cation. Residue Arg-271 is part of the active site.

This sequence belongs to the iron/ascorbate-dependent oxidoreductase family. GA2OX subfamily. Fe cation is required as a cofactor.

The enzyme catalyses gibberellin A1 + 2-oxoglutarate + O2 = gibberellin A8 + succinate + CO2. Its pathway is plant hormone biosynthesis; gibberellin biosynthesis. In terms of biological role, catalyzes the 2-beta-hydroxylation of several biologically active gibberellins, leading to the homeostatic regulation of their endogenous level. Catabolism of gibberellins (GAs) plays a central role in plant development. Converts GA9/GA20 to GA51/GA29 and GA4/GA1 to GA34/GA8. This is Gibberellin 2-beta-dioxygenase (GA2OX1) from Phaseolus coccineus (Scarlet runner bean).